Here is a 570-residue protein sequence, read N- to C-terminus: Small ribosomal subunit protein bS1 (570 aa).

6 S1 motif domains span residues 52–116 (GAIL…LSRE), 134–199 (GSIV…VSRR), 220–288 (GERR…LGLK), 305–375 (GKRV…LGLK), 392–462 (GLRV…LGVK), and 479–548 (GSDI…LSIK).

The protein belongs to the bacterial ribosomal protein bS1 family.

In terms of biological role, binds mRNA; thus facilitating recognition of the initiation point. It is needed to translate mRNA with a short Shine-Dalgarno (SD) purine-rich sequence. The chain is Small ribosomal subunit protein bS1 (rpsA) from Chlamydia muridarum (strain MoPn / Nigg).